The sequence spans 818 residues: Mediator of RNA polymerase II transcription subunit 16 (818 aa).

3 WD repeats span residues 86 to 125, 296 to 342, and 615 to 666; these read SSKS…INLW, LDGR…QSVH, and RLPE…PVYT. The interaction with Dif stretch occupies residues 175-524; that stretch reads TLSGFGGVAS…ANFLALKSNI (350 aa).

This sequence belongs to the Mediator complex subunit 16 family. In terms of assembly, component of the Mediator complex. Interacts with Dif.

The protein resides in the nucleus. Its function is as follows. Component of the Mediator complex, a coactivator involved in the regulated transcription of nearly all RNA polymerase II-dependent genes. Mediator functions as a bridge to convey information from gene-specific regulatory proteins to the basal RNA polymerase II transcription machinery. Mediator is recruited to promoters by direct interactions with regulatory proteins and serves as a scaffold for the assembly of a functional preinitiation complex with RNA polymerase II and the general transcription factors. Required for activated transcription of the MtnA, MtnB and MtnD genes. Required for transcriptional activation in response to lipopolysacchardie (LPS). In Drosophila melanogaster (Fruit fly), this protein is Mediator of RNA polymerase II transcription subunit 16 (MED16).